Consider the following 768-residue polypeptide: Probable beta-glucosidase M (768 aa).

An N-terminal signal peptide occupies residues 1–19 (MHAIAGLTGLLAGVSLSYA). Residues N25, N72, and N259 are each glycosylated (N-linked (GlcNAc...) asparagine). Residue D287 is part of the active site. N315, N322, N394, N434, N472, N543, and N651 each carry an N-linked (GlcNAc...) asparagine glycan.

It belongs to the glycosyl hydrolase 3 family.

The protein resides in the secreted. The enzyme catalyses Hydrolysis of terminal, non-reducing beta-D-glucosyl residues with release of beta-D-glucose.. The protein operates within glycan metabolism; cellulose degradation. In terms of biological role, beta-glucosidases are one of a number of cellulolytic enzymes involved in the degradation of cellulosic biomass. Catalyzes the last step releasing glucose from the inhibitory cellobiose. This Aspergillus oryzae (strain ATCC 42149 / RIB 40) (Yellow koji mold) protein is Probable beta-glucosidase M (bglM).